The following is a 69-amino-acid chain: Cytochrome b-c1 complex subunit 9 (69 aa).

At 1 to 18 (MSFASTLYKTVFKRNSVF) the chain is on the mitochondrial matrix side. A helical transmembrane segment spans residues 19 to 44 (VGTVFASAFVFQAAFDTGVTSWYENH). Topologically, residues 45–69 (NKGKLWKDIKGGIMNGGEEDEEDDE) are mitochondrial intermembrane.

This sequence belongs to the UQCR10/QCR9 family. As to quaternary structure, component of the ubiquinol-cytochrome c oxidoreductase (cytochrome b-c1 complex, complex III, CIII), a multisubunit enzyme composed of 3 respiratory subunits cytochrome b, cytochrome c1 and Rieske protein, 2 core protein subunits, and additional low-molecular weight protein subunits. The complex exists as an obligatory dimer and forms supercomplexes (SCs) in the inner mitochondrial membrane with cytochrome c oxidase (complex IV, CIV).

The protein localises to the mitochondrion inner membrane. Its function is as follows. Component of the ubiquinol-cytochrome c oxidoreductase, a multisubunit transmembrane complex that is part of the mitochondrial electron transport chain which drives oxidative phosphorylation. The respiratory chain contains 3 multisubunit complexes succinate dehydrogenase (complex II, CII), ubiquinol-cytochrome c oxidoreductase (cytochrome b-c1 complex, complex III, CIII) and cytochrome c oxidase (complex IV, CIV), that cooperate to transfer electrons derived from NADH and succinate to molecular oxygen, creating an electrochemical gradient over the inner membrane that drives transmembrane transport and the ATP synthase. The cytochrome b-c1 complex catalyzes electron transfer from ubiquinol to cytochrome c, linking this redox reaction to translocation of protons across the mitochondrial inner membrane, with protons being carried across the membrane as hydrogens on the quinol. In the process called Q cycle, 2 protons are consumed from the matrix, 4 protons are released into the intermembrane space and 2 electrons are passed to cytochrome c. The sequence is that of Cytochrome b-c1 complex subunit 9 (QCR9) from Kluyveromyces lactis (strain ATCC 8585 / CBS 2359 / DSM 70799 / NBRC 1267 / NRRL Y-1140 / WM37) (Yeast).